Consider the following 95-residue polypeptide: Protein J1 homolog (95 aa).

Belongs to the chordopoxvirinae J1 family. In terms of assembly, homodimer. Part of a complex composed of A30, G7, F10 kinase, A15, D2, D3, and J1. Interacts with A45.

Its subcellular location is the virion. It is found in the host cytoplasm. Functionally, late protein which is a part of a large complex required for early virion morphogenesis. This complex participates in the formation of virosomes and the incorporation of virosomal contents into nascent immature virions. J1 protein is required for DNA packaging during immature virions (IV) formation. The sequence is that of Protein J1 homolog from Sus scrofa (Pig).